Consider the following 333-residue polypeptide: NADH-quinone oxidoreductase subunit H (333 aa).

The next 8 membrane-spanning stretches (helical) occupy residues 15 to 35, 88 to 108, 117 to 137, 165 to 185, 191 to 211, 241 to 261, 274 to 294, and 313 to 333; these read IALFFGLGALLLAVVLAFVTY, YVLAPIIAFVPSFMVLAVLPF, IGVGLLYYIAVSGLTTVGVVA, LVMSALGVVLLAGSMNLVDIV, VWFIFAQPLAFLIFLIAAVAE, FFMLAEYVYLFAMAALVTILF, IPGAVWFALKFCAVVFVLIWF, and VLLPLSLVNIVLTAVVKAWFF.

It belongs to the complex I subunit 1 family. In terms of assembly, NDH-1 is composed of 14 different subunits. Subunits NuoA, H, J, K, L, M, N constitute the membrane sector of the complex.

The protein localises to the cell membrane. It carries out the reaction a quinone + NADH + 5 H(+)(in) = a quinol + NAD(+) + 4 H(+)(out). NDH-1 shuttles electrons from NADH, via FMN and iron-sulfur (Fe-S) centers, to quinones in the respiratory chain. The immediate electron acceptor for the enzyme in this species is believed to be ubiquinone. Couples the redox reaction to proton translocation (for every two electrons transferred, four hydrogen ions are translocated across the cytoplasmic membrane), and thus conserves the redox energy in a proton gradient. This subunit may bind ubiquinone. This Geobacillus kaustophilus (strain HTA426) protein is NADH-quinone oxidoreductase subunit H.